We begin with the raw amino-acid sequence, 1407 residues long: E3 ubiquitin-protein ligase linker protein MMS1 (1407 aa).

Residues 1–600 form a required for interaction with MMS22 region; it reads MLGLRTHGLD…QFQIFRHLRI (600 aa). Thr1294 is subject to Phosphothreonine.

As to quaternary structure, component of multiple cullin-RING ligases (CRLs) composed of 4 subunits: the RING protein HRT1, the cullin RTT101, a linker protein MMS1, and one of many alternative substrate receptors belonging to a protein family described as DCAF (DDB1- and CUL4-associated factor). Component of a RTT101(MMS1-MMS22) complex with the substrate receptor MMS22. This complex further interacts with RTT107 and CTF4 to form RTT101-MMS1-MMS22-RTT107 and RTT101-MMS1-MMS22-CTF4 complexes respectively. Component of a RTT101(MSS1-CRT10) complex with the substrate receptor CRT10. Component of a RTT101(MSS1-ESC2) complex with the potential substrate receptor ESC2. Component of a RTT101(MSS1-ORC5) complex with the potential substrate receptor ORC5. Interacts with RTT101 (via N-ter). Interacts (via N-ter) with MMS22 (via C-ter). Interacts with CRT10.

The protein resides in the nucleus. In terms of biological role, component of multiple cullin-RING-based E3 ubiquitin-protein ligase complexes (CRLs), which mediate the ubiquitination of target proteins. The CRL associates with CDC34 as the E2 ubiquitin-conjugating enzyme. The functional specificity of the CRL depends on the type of the associated substrate receptor protein. RTT101(MMS1-MMS22) promotes fork progression through damaged DNA or natural pause sites by stabilizing replication proteins like the replication fork-pausing complex (FPC) and leading-strand polymerase at stalled replication forks. RTT101(MMS1-MMS22) ubiquitinates the acetylated histones H3K56ac-H4 at lysine residues H3K121, H3K122 and H3K125. Ubiquitination is required for efficient histone deposition during replication-coupled nucleosome assembly, probably by facilitating the transfer of H3-H4 from ASF1 to other chaperones involved in histone deposition. RTT101(MMS1-CRT10) may regulate nucleotide synthesis through transcriptional regulation of ribonucleotide reductase. RTT101(MMS1) is also involved in the non-functional rRNA decay (NRD) of 25S rRNA through the selective, ubiquitination-dependent degradation of nonfunctional ribosomal particles. Involved in the regulation of TY1 transposition. The protein is E3 ubiquitin-protein ligase linker protein MMS1 (MMS1) of Saccharomyces cerevisiae (strain ATCC 204508 / S288c) (Baker's yeast).